Reading from the N-terminus, the 177-residue chain is Peptide methionine sulfoxide reductase MsrA 2 (177 aa).

Residue cysteine 12 is part of the active site.

Belongs to the MsrA Met sulfoxide reductase family.

It catalyses the reaction L-methionyl-[protein] + [thioredoxin]-disulfide + H2O = L-methionyl-(S)-S-oxide-[protein] + [thioredoxin]-dithiol. It carries out the reaction [thioredoxin]-disulfide + L-methionine + H2O = L-methionine (S)-S-oxide + [thioredoxin]-dithiol. Functionally, has an important function as a repair enzyme for proteins that have been inactivated by oxidation. Catalyzes the reversible oxidation-reduction of methionine sulfoxide in proteins to methionine. In Staphylococcus aureus (strain NCTC 8325 / PS 47), this protein is Peptide methionine sulfoxide reductase MsrA 2 (msrA2).